A 171-amino-acid chain; its full sequence is S-ribosylhomocysteine lyase (171 aa).

3 residues coordinate Fe cation: H54, H58, and C128.

The protein belongs to the LuxS family. In terms of assembly, homodimer. Requires Fe cation as cofactor.

The catalysed reaction is S-(5-deoxy-D-ribos-5-yl)-L-homocysteine = (S)-4,5-dihydroxypentane-2,3-dione + L-homocysteine. Involved in the synthesis of autoinducer 2 (AI-2) which is secreted by bacteria and is used to communicate both the cell density and the metabolic potential of the environment. The regulation of gene expression in response to changes in cell density is called quorum sensing. Catalyzes the transformation of S-ribosylhomocysteine (RHC) to homocysteine (HC) and 4,5-dihydroxy-2,3-pentadione (DPD). In Yersinia pseudotuberculosis serotype O:1b (strain IP 31758), this protein is S-ribosylhomocysteine lyase.